A 476-amino-acid polypeptide reads, in one-letter code: MGIKFLEFIKPFCAVLPEIQKPERKIQFREKVLWTAITLFIFLVCCQIPLFGIMSSDSADPFYWMRVILASNRGTLMELGISPIVTSGLIMQLLAGAKIIEVGDTPKDRALFNGAQKLFGMIITIGQAIVYVMTGMYGDPSEMGAGICLLIIIQLFVAGLIVLLLDELLQKGYGLGSGISLFIATNICETIVWKAFSPTTVNTGRGTEFEGAIIALFHLLATRTDKVRALREAFYRQNLPNILNLIATVFVFAVVIYFQGFRVDLPIKSARYRGQYNTYPIKLFYTSNIPIILQSALVSNLYVISQMLSTRFSGNFLVNLLGTWSDATSGGPARAYPVAGLCYYLSPPESFGSVLDDPVHAAIYIVFMLGSCAFFSKTWIEVSGSSAKDVAKQLKEQQMVMRGHRETSMVHELNRYIPTAAAFGGLCIGGLSVMADFLGAIGSGTGILLAVTIIYQYFEIFVKEQSEMGSMGALLF.

At 2–33 the chain is on the cytoplasmic side; that stretch reads GIKFLEFIKPFCAVLPEIQKPERKIQFREKVL. Residues 34–53 form a helical membrane-spanning segment; that stretch reads WTAITLFIFLVCCQIPLFGI. Residues 54-76 are Lumenal-facing; it reads MSSDSADPFYWMRVILASNRGTL. A helical membrane pass occupies residues 77–96; that stretch reads MELGISPIVTSGLIMQLLAG. Topologically, residues 97 to 117 are cytoplasmic; it reads AKIIEVGDTPKDRALFNGAQK. A helical transmembrane segment spans residues 118 to 138; it reads LFGMIITIGQAIVYVMTGMYG. Over 139-144 the chain is Lumenal; sequence DPSEMG. A helical transmembrane segment spans residues 145 to 165; that stretch reads AGICLLIIIQLFVAGLIVLLL. Residues 166 to 172 lie on the Cytoplasmic side of the membrane; the sequence is DELLQKG. The chain crosses the membrane as a helical span at residues 173-193; sequence YGLGSGISLFIATNICETIVW. Residues 194-240 are Lumenal-facing; that stretch reads KAFSPTTVNTGRGTEFEGAIIALFHLLATRTDKVRALREAFYRQNLP. The helical transmembrane segment at 241-261 threads the bilayer; the sequence is NILNLIATVFVFAVVIYFQGF. Over 262-288 the chain is Cytoplasmic; it reads RVDLPIKSARYRGQYNTYPIKLFYTSN. A helical membrane pass occupies residues 289–309; that stretch reads IPIILQSALVSNLYVISQMLS. At 310 to 354 the chain is on the lumenal side; that stretch reads TRFSGNFLVNLLGTWSDATSGGPARAYPVAGLCYYLSPPESFGSV. Residues 355–375 form a helical membrane-spanning segment; sequence LDDPVHAAIYIVFMLGSCAFF. Residues 376–420 lie on the Cytoplasmic side of the membrane; it reads SKTWIEVSGSSAKDVAKQLKEQQMVMRGHRETSMVHELNRYIPTA. A helical membrane pass occupies residues 421–441; that stretch reads AAFGGLCIGGLSVMADFLGAI. Residues 442-445 lie on the Lumenal side of the membrane; it reads GSGT. Residues 446-462 form a helical membrane-spanning segment; the sequence is GILLAVTIIYQYFEIFV. The Cytoplasmic segment spans residues 463–476; sequence KEQSEMGSMGALLF.

It belongs to the SecY/SEC61-alpha family. As to quaternary structure, the SEC61 channel-forming translocon complex consists of channel-forming core components SEC61A1, SEC61B and SEC61G and different auxiliary components such as SEC62 and SEC63. The SEC61 channel associates with the multi-pass translocon (MPT) complex.

It is found in the endoplasmic reticulum membrane. In terms of biological role, component of SEC61 channel-forming translocon complex that mediates transport of signal peptide-containing precursor polypeptides across the endoplasmic reticulum (ER). Forms a ribosome receptor and a gated pore in the ER membrane, both functions required for cotranslational translocation of nascent polypeptides. May cooperate with auxiliary protein SEC62, SEC63 and HSPA5/BiP to enable post-translational transport of small presecretory proteins. The SEC61 channel is also involved in ER membrane insertion of transmembrane proteins: it mediates membrane insertion of the first few transmembrane segments of proteins, while insertion of subsequent transmembrane regions of multi-pass membrane proteins is mediated by the multi-pass translocon (MPT) complex. In Notothenia angustata (Rockcod), this protein is Protein transport protein Sec61 subunit alpha (sec61a).